The following is a 417-amino-acid chain: Serine hydroxymethyltransferase (417 aa).

(6S)-5,6,7,8-tetrahydrofolate-binding positions include L116 and 120-122 (GHL). An N6-(pyridoxal phosphate)lysine modification is found at K225.

Belongs to the SHMT family. In terms of assembly, homodimer. It depends on pyridoxal 5'-phosphate as a cofactor.

It is found in the cytoplasm. The enzyme catalyses (6R)-5,10-methylene-5,6,7,8-tetrahydrofolate + glycine + H2O = (6S)-5,6,7,8-tetrahydrofolate + L-serine. It functions in the pathway one-carbon metabolism; tetrahydrofolate interconversion. Its pathway is amino-acid biosynthesis; glycine biosynthesis; glycine from L-serine: step 1/1. Catalyzes the reversible interconversion of serine and glycine with tetrahydrofolate (THF) serving as the one-carbon carrier. This reaction serves as the major source of one-carbon groups required for the biosynthesis of purines, thymidylate, methionine, and other important biomolecules. Also exhibits THF-independent aldolase activity toward beta-hydroxyamino acids, producing glycine and aldehydes, via a retro-aldol mechanism. The polypeptide is Serine hydroxymethyltransferase (Hydrogenobaculum sp. (strain Y04AAS1)).